Reading from the N-terminus, the 124-residue chain is U-scoloptoxin-Er5d (124 aa).

Residues 1–22 form the signal peptide; the sequence is MKTNCEFPLLCLLIVLVANVEG. A propeptide spanning residues 23-94 is cleaved from the precursor; it reads EVEDNELKMV…KRLWRNWERR (72 aa). RLWRNWE repeat units lie at residues 34 to 40, 61 to 67, and 86 to 92; these read RLWRNWE. Residue Gln95 is modified to Pyrrolidone carboxylic acid. The stretch at 107–113 is one RLWRNWE 4; approximate repeat; it reads ELWRNWE. The propeptide occupies 112 to 124; sequence WEDLKRRQVGRFE.

Belongs to the scoloptoxin-08 family. As to expression, expressed by the venom gland.

The protein localises to the secreted. In Ethmostigmus rubripes (Giant centipede), this protein is U-scoloptoxin-Er5d.